We begin with the raw amino-acid sequence, 66 residues long: Large ribosomal subunit protein bL31 (66 aa).

C16, C18, C36, and C39 together coordinate Zn(2+).

The protein belongs to the bacterial ribosomal protein bL31 family. Type A subfamily. As to quaternary structure, part of the 50S ribosomal subunit. Zn(2+) is required as a cofactor.

Binds the 23S rRNA. The protein is Large ribosomal subunit protein bL31 of Priestia megaterium (Bacillus megaterium).